Here is a 72-residue protein sequence, read N- to C-terminus: Translation initiation factor IF-1 (72 aa).

The 72-residue stretch at 1-72 (MAKEEVLEFP…TKGRITYRFK (72 aa)) folds into the S1-like domain.

This sequence belongs to the IF-1 family. As to quaternary structure, component of the 30S ribosomal translation pre-initiation complex which assembles on the 30S ribosome in the order IF-2 and IF-3, IF-1 and N-formylmethionyl-tRNA(fMet); mRNA recruitment can occur at any time during PIC assembly.

It localises to the cytoplasm. Its function is as follows. One of the essential components for the initiation of protein synthesis. Stabilizes the binding of IF-2 and IF-3 on the 30S subunit to which N-formylmethionyl-tRNA(fMet) subsequently binds. Helps modulate mRNA selection, yielding the 30S pre-initiation complex (PIC). Upon addition of the 50S ribosomal subunit IF-1, IF-2 and IF-3 are released leaving the mature 70S translation initiation complex. The protein is Translation initiation factor IF-1 of Sinorhizobium medicae (strain WSM419) (Ensifer medicae).